Here is a 459-residue protein sequence, read N- to C-terminus: Mycothione reductase (459 aa).

An FAD-binding site is contributed by 31-39; sequence EQGTFGGTC. Cysteines 39 and 44 form a disulfide. His444 (proton acceptor) is an active-site residue.

Belongs to the class-I pyridine nucleotide-disulfide oxidoreductase family. In terms of assembly, homodimer. Requires FAD as cofactor.

The catalysed reaction is 2 mycothiol + NADP(+) = mycothione + NADPH + H(+). It catalyses the reaction 2 mycothiol + NAD(+) = mycothione + NADH + H(+). Catalyzes the NAD(P)H-dependent reduction of mycothione (the oxidized disulfide form of mycothiol) to mycothiol. The protein is Mycothione reductase (mtr) of Mycobacterium tuberculosis (strain CDC 1551 / Oshkosh).